Reading from the N-terminus, the 1074-residue chain is Phospholipase D1 (1074 aa).

The region spanning 81 to 212 (VKAQVLEVER…TEFLDVSQLS (132 aa)) is the PX domain. One can recognise a PH domain in the interval 219-328 (PKGLEGMIMK…WGGAIEEFIQ (110 aa)). S-palmitoyl cysteine attachment occurs at residues Cys240 and Cys241. The 28-residue stretch at 459–486 (YLWAHHEKLVIIDQSVAFVGGIDLAYGR) folds into the PLD phosphodiesterase 1 domain. Residues 463–928 (HHEKLVIIDQ…MLGKRDSEMA (466 aa)) form a catalytic region. 3 positions are modified to phosphoserine: Ser499, Ser561, and Ser629. The PLD phosphodiesterase 2 domain maps to 891 to 918 (ELIYVHSKLLIADDNTVIIGSANINDRS).

The protein belongs to the phospholipase D family. In terms of assembly, interacts with PIP5K1B. In terms of processing, phosphorylated on serine and threonine residues. Post-translationally, it is uncertain whether palmitoylation is on Cys-240 and/or Cys-241. Palmitoylation is required prior to phosphorylation.

It is found in the cytoplasm. Its subcellular location is the perinuclear region. It localises to the endoplasmic reticulum membrane. The protein resides in the golgi apparatus membrane. The protein localises to the late endosome membrane. The catalysed reaction is a 1,2-diacyl-sn-glycero-3-phosphocholine + H2O = a 1,2-diacyl-sn-glycero-3-phosphate + choline + H(+). The enzyme catalyses ethanol + a 1,2-diacyl-sn-glycero-3-phosphocholine = 1,2-diacyl-sn-glycero-3-phosphoethanol + choline. It catalyses the reaction 1,2-dihexadecanoyl-sn-glycero-3-phosphocholine + H2O = 1,2-dihexadecanoyl-sn-glycero-3-phosphate + choline + H(+). Its activity is regulated as follows. Stimulated by phosphatidylinositol 4,5-bisphosphate and phosphatidylinositol 3,4,5-trisphosphate, activated by the phosphokinase C-alpha, by the ADP-ribosylation factor-1 (ARF-1), and to a lesser extent by GTP-binding proteins: RHO A, RAC-1 and CDC42. Inhibited by oleate. Function as phospholipase selective for phosphatidylcholine. Implicated as a critical step in numerous cellular pathways, including signal transduction, membrane trafficking, and the regulation of mitosis. May be involved in the regulation of perinuclear intravesicular membrane traffic. The protein is Phospholipase D1 of Rattus norvegicus (Rat).